Reading from the N-terminus, the 239-residue chain is Probable transcriptional regulatory protein lin0388 (239 aa).

Belongs to the TACO1 family. YeeN subfamily.

The protein resides in the cytoplasm. This is Probable transcriptional regulatory protein lin0388 from Listeria innocua serovar 6a (strain ATCC BAA-680 / CLIP 11262).